Here is a 136-residue protein sequence, read N- to C-terminus: uncharacterized protein (136 aa).

The chain crosses the membrane as a helical span at residues 19–39 (LGFPLGTALLLIIIFSLSGIF). 2 disordered regions span residues 54–87 (SLAN…LSVP) and 112–136 (KLTV…VPLY).

The protein resides in the membrane. This is an uncharacterized protein from Arabidopsis thaliana (Mouse-ear cress).